The sequence spans 170 residues: Ribosome maturation factor RimM (170 aa).

The PRC barrel domain maps to 98–170 (PDEYYWVDLE…LIVVDWDPDF (73 aa)).

Belongs to the RimM family. As to quaternary structure, binds ribosomal protein uS19.

It localises to the cytoplasm. An accessory protein needed during the final step in the assembly of 30S ribosomal subunit, possibly for assembly of the head region. Essential for efficient processing of 16S rRNA. May be needed both before and after RbfA during the maturation of 16S rRNA. It has affinity for free ribosomal 30S subunits but not for 70S ribosomes. The protein is Ribosome maturation factor RimM of Xanthomonas oryzae pv. oryzae (strain MAFF 311018).